We begin with the raw amino-acid sequence, 281 residues long: Diaminopimelate epimerase (281 aa).

Substrate contacts are provided by N13 and N66. The Proton donor role is filled by C75. Substrate is bound by residues G76 to N77, N164, N197, and E215 to R216. C224 serves as the catalytic Proton acceptor. G225–T226 is a substrate binding site.

The protein belongs to the diaminopimelate epimerase family. As to quaternary structure, homodimer.

It localises to the cytoplasm. It carries out the reaction (2S,6S)-2,6-diaminopimelate = meso-2,6-diaminopimelate. It functions in the pathway amino-acid biosynthesis; L-lysine biosynthesis via DAP pathway; DL-2,6-diaminopimelate from LL-2,6-diaminopimelate: step 1/1. Catalyzes the stereoinversion of LL-2,6-diaminopimelate (L,L-DAP) to meso-diaminopimelate (meso-DAP), a precursor of L-lysine and an essential component of the bacterial peptidoglycan. The sequence is that of Diaminopimelate epimerase from Gloeothece citriformis (strain PCC 7424) (Cyanothece sp. (strain PCC 7424)).